We begin with the raw amino-acid sequence, 347 residues long: MSVMFDPDTAIYPFPPKPTPLSIDEKAYYREKIKRLLKERNAVMVAHYYTDPEIQQLAEETGGCISDSLEMARFGAKHPASTLLVAGVRFMGETAKILSPEKTILMPTLQAECSLDLGCPVEEFNAFCDAHPDRTVVVYANTSAAVKARADWVVTSSIAVELIDHLDSLGEKIIWAPDKHLGRYVQKQTGGDILCWQGACIVHDEFKTQALTRLQEEYPDAAILVHPESPQAIVDMADAVGSTSQLIAAAKTLPHQRLIVATDRGIFYKMQQAVPDKELLEAPTAGEGATCRSCAHCPWMAMNDLQAIAEALEQEGSNHEVHVDERLRERALVPLNRMLDFAATLRG.

Iminosuccinate is bound by residues H47 and S68. C113 contacts [4Fe-4S] cluster. Iminosuccinate is bound by residues 139 to 141 (YAN) and S156. C200 serves as a coordination point for [4Fe-4S] cluster. Iminosuccinate-binding positions include 226–228 (HPE) and T243. Residue C297 participates in [4Fe-4S] cluster binding.

Belongs to the quinolinate synthase family. Type 1 subfamily. The cofactor is [4Fe-4S] cluster.

It is found in the cytoplasm. The enzyme catalyses iminosuccinate + dihydroxyacetone phosphate = quinolinate + phosphate + 2 H2O + H(+). Its pathway is cofactor biosynthesis; NAD(+) biosynthesis; quinolinate from iminoaspartate: step 1/1. Its function is as follows. Catalyzes the condensation of iminoaspartate with dihydroxyacetone phosphate to form quinolinate. The sequence is that of Quinolinate synthase from Shigella boydii serotype 4 (strain Sb227).